The chain runs to 218 residues: MNSVTVSHAPYTITYHDDWEPVMSQLVEFYNEVASWLLRDETSPIPDKFFIQLKQPLRNKRVCVCGIDPYPKDGTGVPFESPNFTKKSIKEIASSISRLTGVIDYKGYNLNIIDGVIPWNYYLSCKLGETKSHAIYWDKISKLLLQHITKHVSVLYCLGKTDFSNIRAKLESPVTTIVGYHPAARDRQFEKDRSFEIINVLLELDNKAPINWAQGFIY.

Residue D68 is the Proton acceptor of the active site.

It belongs to the uracil-DNA glycosylase (UDG) superfamily. UNG family. In terms of assembly, homodimer. Interacts with protein OPG148. Component of the Uracil-DNA glycosylase(UDG)-OPG148-polymerase complex; OPG148 and UDG form a heterodimeric processivity factor that associates with OPG71 to form the processive polymerase holoenzyme.

It catalyses the reaction Hydrolyzes single-stranded DNA or mismatched double-stranded DNA and polynucleotides, releasing free uracil.. Its function is as follows. Plays an essential role in viral replication as a component of the DNA polymerase processivity factor. Excises uracil residues from the DNA which can arise as a result of misincorporation of dUMP residues by DNA polymerase or due to deamination of cytosine. The sequence is that of Uracil-DNA glycosylase (OPG116) from Vaccinia virus (strain Ankara) (VACV).